The sequence spans 65 residues: Large ribosomal subunit protein bL35 (65 aa).

A compositionally biased stretch (basic residues) spans 1 to 11; sequence MPKIKTRRSAA. A disordered region spans residues 1–25; sequence MPKIKTRRSAAKRFSVTGSGKFRRR.

Belongs to the bacterial ribosomal protein bL35 family.

The polypeptide is Large ribosomal subunit protein bL35 (Nitratidesulfovibrio vulgaris (strain ATCC 29579 / DSM 644 / CCUG 34227 / NCIMB 8303 / VKM B-1760 / Hildenborough) (Desulfovibrio vulgaris)).